Here is a 436-residue protein sequence, read N- to C-terminus: Xylose isomerase (436 aa).

Residues Asp-306 and Asp-308 each contribute to the Mg(2+) site.

It belongs to the xylose isomerase family. In terms of assembly, homotetramer. Requires Mg(2+) as cofactor.

Its subcellular location is the cytoplasm. The catalysed reaction is alpha-D-xylose = alpha-D-xylulofuranose. In Rhizobium rhizogenes (strain K84 / ATCC BAA-868) (Agrobacterium radiobacter), this protein is Xylose isomerase.